We begin with the raw amino-acid sequence, 191 residues long: Adenylate kinase (191 aa).

Position 12 to 17 (G12 to T17) interacts with ATP. The segment at S34–V63 is NMP. AMP contacts are provided by residues T35, R40, E61–V63, G88–R91, and Q95. An LID region spans residues G130 to D136. R131 is an ATP binding site. The AMP site is built by R133 and R145. R173 contributes to the ATP binding site.

This sequence belongs to the adenylate kinase family. Monomer.

The protein localises to the cytoplasm. It catalyses the reaction AMP + ATP = 2 ADP. Its pathway is purine metabolism; AMP biosynthesis via salvage pathway; AMP from ADP: step 1/1. Functionally, catalyzes the reversible transfer of the terminal phosphate group between ATP and AMP. Plays an important role in cellular energy homeostasis and in adenine nucleotide metabolism. The polypeptide is Adenylate kinase (Helicobacter pylori (strain HPAG1)).